The following is a 390-amino-acid chain: Transforming growth factor beta-1 proprotein (390 aa).

The N-terminal stretch at 1 to 29 (MPPSGLRLLPLLLPLPWLLVLTPGRPAAG) is a signal peptide. A straightjacket domain region spans residues 30-74 (LSTCKTIDMELVKRKRIEAIRGQILSKLRLASPPSQGEVPPGPLP). The segment at 75–271 (EAVLALYNST…ATPLERAQHL (197 aa)) is arm domain. N-linked (GlcNAc...) asparagine glycans are attached at residues Asn82, Asn136, and Asn176. The bowtie tail stretch occupies residues 226–252 (DSKDNVLHVEINGISPKRRGDLGTIHD). The Cell attachment site motif lies at 244-246 (RGD). Disulfide bonds link Cys285–Cys294, Cys293–Cys356, Cys322–Cys387, and Cys326–Cys389.

Belongs to the TGF-beta family. As to quaternary structure, homodimer; disulfide-linked. Interacts with the serine proteases, HTRA1 and HTRA3: the interaction with either inhibits TGFB1-mediated signaling and the HTRA protease activity is required for this inhibition. May interact with THSD4; this interaction may lead to sequestration by FBN1 microfibril assembly and attenuation of TGFB signaling. Interacts with CD109, DPT and ASPN. Interacts with EFEMP2. Interacts with TSKU; the interaction contributes to regulation of the hair cycle. Interacts with TGFBR3. Homodimer; disulfide-linked. Interacts with transforming growth factor beta-1 (TGF-beta-1) chain; interaction is non-covalent and maintains TGF-beta-1 in a latent state; each latency-associated peptide (LAP) monomer interacts with TGF-beta-1 in the other monomer. Interacts with LTBP1; leading to regulation of TGF-beta-1 activation. Interacts with LRRC32/GARP; leading to regulation of TGF-beta-1 activation on the surface of activated regulatory T-cells (Tregs). Interacts with LRRC33/NRROS; leading to regulation of TGF-beta-1 activation in macrophages and microglia. Interacts (via cell attachment site) with integrins ITGAV and ITGB6 (ITGAV:ITGB6), leading to release of the active TGF-beta-1. Interacts with NREP; the interaction results in a decrease in TGFB1 autoinduction. Interacts with HSP90AB1; inhibits latent TGFB1 activation. In terms of assembly, homodimer; disulfide-linked. Interacts with TGF-beta receptors (TGFBR1 and TGFBR2), leading to signal transduction. Transforming growth factor beta-1 proprotein: The precursor proprotein is cleaved in the Golgi apparatus by FURIN to form Transforming growth factor beta-1 (TGF-beta-1) and Latency-associated peptide (LAP) chains, which remain non-covalently linked, rendering TGF-beta-1 inactive. In terms of processing, N-glycosylated. Deglycosylation leads to activation of Transforming growth factor beta-1 (TGF-beta-1); mechanisms triggering deglycosylation-driven activation of TGF-beta-1 are however unclear. In terms of tissue distribution, abundant in the bone matrix. Expressed in cardiomyocytes.

It localises to the secreted. The protein resides in the extracellular space. It is found in the extracellular matrix. In terms of biological role, transforming growth factor beta-1 proprotein: Precursor of the Latency-associated peptide (LAP) and Transforming growth factor beta-1 (TGF-beta-1) chains, which constitute the regulatory and active subunit of TGF-beta-1, respectively. Its function is as follows. Required to maintain the Transforming growth factor beta-1 (TGF-beta-1) chain in a latent state during storage in extracellular matrix. Associates non-covalently with TGF-beta-1 and regulates its activation via interaction with 'milieu molecules', such as LTBP1, LRRC32/GARP and LRRC33/NRROS, that control activation of TGF-beta-1. Interaction with LRRC33/NRROS regulates activation of TGF-beta-1 in macrophages and microglia. Interaction with LRRC32/GARP controls activation of TGF-beta-1 on the surface of activated regulatory T-cells (Tregs). Interaction with integrins (ITGAV:ITGB6 or ITGAV:ITGB8) results in distortion of the Latency-associated peptide chain and subsequent release of the active TGF-beta-1. Multifunctional protein that regulates the growth and differentiation of various cell types and is involved in various processes, such as normal development, immune function, microglia function and responses to neurodegeneration. Activation into mature form follows different steps: following cleavage of the proprotein in the Golgi apparatus, Latency-associated peptide (LAP) and Transforming growth factor beta-1 (TGF-beta-1) chains remain non-covalently linked rendering TGF-beta-1 inactive during storage in extracellular matrix. At the same time, LAP chain interacts with 'milieu molecules', such as LTBP1, LRRC32/GARP and LRRC33/NRROS that control activation of TGF-beta-1 and maintain it in a latent state during storage in extracellular milieus. TGF-beta-1 is released from LAP by integrins (ITGAV:ITGB6 or ITGAV:ITGB8): integrin-binding to LAP stabilizes an alternative conformation of the LAP bowtie tail and results in distortion of the LAP chain and subsequent release of the active TGF-beta-1. Once activated following release of LAP, TGF-beta-1 acts by binding to TGF-beta receptors (TGFBR1 and TGFBR2), which transduce signal. While expressed by many cells types, TGF-beta-1 only has a very localized range of action within cell environment thanks to fine regulation of its activation by Latency-associated peptide chain (LAP) and 'milieu molecules'. Plays an important role in bone remodeling: acts as a potent stimulator of osteoblastic bone formation, causing chemotaxis, proliferation and differentiation in committed osteoblasts. Can promote either T-helper 17 cells (Th17) or regulatory T-cells (Treg) lineage differentiation in a concentration-dependent manner. At high concentrations, leads to FOXP3-mediated suppression of RORC and down-regulation of IL-17 expression, favoring Treg cell development. At low concentrations in concert with IL-6 and IL-21, leads to expression of the IL-17 and IL-23 receptors, favoring differentiation to Th17 cells. Stimulates sustained production of collagen through the activation of CREB3L1 by regulated intramembrane proteolysis (RIP). Mediates SMAD2/3 activation by inducing its phosphorylation and subsequent translocation to the nucleus. Positively regulates odontoblastic differentiation in dental papilla cells, via promotion of IPO7-mediated translocation of phosphorylated SMAD2 to the nucleus and subsequent transcription of target genes. Can induce epithelial-to-mesenchymal transition (EMT) and cell migration in various cell types. The sequence is that of Transforming growth factor beta-1 proprotein (Tgfb1) from Rattus norvegicus (Rat).